Reading from the N-terminus, the 226-residue chain is Lipoprotein-releasing system ATP-binding protein LolD (226 aa).

The ABC transporter domain occupies 6–226 (LSVEQVSKSF…QLQQGSLIRI (221 aa)). ATP is bound at residue 42–49 (GESGCGKS).

This sequence belongs to the ABC transporter superfamily. Lipoprotein translocase (TC 3.A.1.125) family. In terms of assembly, the complex is composed of two ATP-binding proteins (LolD) and two transmembrane proteins (LolC and LolE).

It localises to the cell inner membrane. Functionally, part of the ABC transporter complex LolCDE involved in the translocation of mature outer membrane-directed lipoproteins, from the inner membrane to the periplasmic chaperone, LolA. Responsible for the formation of the LolA-lipoprotein complex in an ATP-dependent manner. The sequence is that of Lipoprotein-releasing system ATP-binding protein LolD from Treponema pallidum (strain Nichols).